The following is a 474-amino-acid chain: Flotillin-like protein 3 (474 aa).

Cys-35 carries S-palmitoyl cysteine lipidation. 2 coiled-coil regions span residues 235–255 (ENQR…KKAA) and 305–325 (QYET…KEAE).

It belongs to the band 7/mec-2 family. Flotillin subfamily. In terms of processing, may be palmitoylated. As to expression, expressed in all plant organs. Primarily expressed in vascular tissues. No change in spatial expression in root upon inoculation. Expression limited to the nodule vascular tissue.

It is found in the cell membrane. It localises to the membrane. The protein resides in the caveola. May act as a scaffolding protein within caveolar membranes, functionally participating in formation of caveolae or caveolae-like vesicles. May be involved in nodule formation. This Medicago truncatula (Barrel medic) protein is Flotillin-like protein 3 (FLOT3).